Here is a 225-residue protein sequence, read N- to C-terminus: Class E basic helix-loop-helix protein 23 (225 aa).

Residues 35 to 104 are disordered; sequence EAARGYGTPG…PREQRSLRLS (70 aa). Residues 100–154 form the bHLH domain; the sequence is SLRLSINARERRRMHDLNDALDGLRAVIPYAHSPSVRKLSKIATLLLAKNYILMQ.

The protein resides in the nucleus. May function as transcriptional repressor. May modulate the expression of genes required for the differentiation and/or maintenance of pancreatic and neuronal cell types. May be important for rod bipolar cell maturation. The polypeptide is Class E basic helix-loop-helix protein 23 (BHLHE23) (Homo sapiens (Human)).